A 295-amino-acid chain; its full sequence is Nucleotide-binding protein Lxx11490 (295 aa).

ATP is bound at residue 19–26; it reads GMSGAGRS. 70–73 provides a ligand contact to GTP; sequence DVRG.

This sequence belongs to the RapZ-like family.

In terms of biological role, displays ATPase and GTPase activities. This is Nucleotide-binding protein Lxx11490 from Leifsonia xyli subsp. xyli (strain CTCB07).